The sequence spans 185 residues: Ribosome-recycling factor (185 aa).

Positions 141–161 (KQEKDKKISEDDLKRAEKEVQ) are disordered.

This sequence belongs to the RRF family.

Its subcellular location is the cytoplasm. Its function is as follows. Responsible for the release of ribosomes from messenger RNA at the termination of protein biosynthesis. May increase the efficiency of translation by recycling ribosomes from one round of translation to another. The sequence is that of Ribosome-recycling factor from Geotalea uraniireducens (strain Rf4) (Geobacter uraniireducens).